A 506-amino-acid chain; its full sequence is MPAAAVQEAVGVCSYGMQLSWDINDPQMPQELALFDQFREWPDGYVRFIYSSDEKKAQRHLSGWAMRNTNNHNGHILKKSCLGVVVCTQACTLPDGSRLQLRPAICDKARLKQQKKACPNCHSALELIPCRGHSGYPVTNFWRLDGNAIFFQAKGVHDHPRPESKSETEARRSAIKRQMASFYQPQKKRIRESEAEENQDSSGHFSNIPPLENPEDFDIVTETSFPIPGQPCPSFPKSDVYKATCDLATFQGDKMPPFQKYSSPRIYLPRPPCSYELANPGYTNSSPYPTLYKDSTSIPNDTDWVHLNTLQCNVNSYSSYERSFDFTNKQHGWKPALGKPSLVERTNHGQFQAMATRPYYNPELPCRYLTTPPPGAPALQTVITTTTKVSYQAYQPPAMKYSDSVREVKSLSSCNYAPEDTGMSVYPEPWGPPVTVTRAASPSGPPPMKIAGDCRAIRPTVAIPHEPVSSRTDEAETWDVCLSGLGSAVSYSDRVGPFFTYNNEDF.

Positions 19–174 (LSWDINDPQM…KSETEARRSA (156 aa)) form a DNA-binding region, GCM. Cys81, Cys87, Cys91, Cys118, Cys121, Cys130, His157, and His159 together coordinate Zn(2+). The span at 155–172 (GVHDHPRPESKSETEARR) shows a compositional bias: basic and acidic residues. Residues 155–213 (GVHDHPRPESKSETEARRSAIKRQMASFYQPQKKRIRESEAEENQDSSGHFSNIPPLEN) form a disordered region. The C-terminal conserved inhibitory domain (CCID) stretch occupies residues 379–395 (LQTVITTTTKVSYQAYQ).

The protein localises to the nucleus. Transcription factor that binds specific sequences on gene promoters and activate their transcription. Through the regulation of gene transcription, may play a role in parathyroid gland development. This is Chorion-specific transcription factor GCMb from Homo sapiens (Human).